The following is a 512-amino-acid chain: Neuronal acetylcholine receptor subunit alpha-3 (512 aa).

The signal sequence occupies residues Met-1–Ser-23. The Extracellular portion of the chain corresponds to Ser-24–Ile-242. N-linked (GlcNAc...) asparagine glycosylation is found at Asn-47 and Asn-164. 2 disulfides stabilise this stretch: Cys-151-Cys-165 and Cys-215-Cys-216. Residues Pro-243 to Pro-258 traverse the membrane as a helical segment. At Ser-259 to Asp-260 the chain is on the cytoplasmic side. A helical membrane pass occupies residues Cys-261–Val-277. Residue Glu-263 participates in Na(+) binding. Residues Phe-278 to Tyr-299 lie on the Extracellular side of the membrane. A helical transmembrane segment spans residues Leu-300–Leu-318. The Cytoplasmic segment spans residues Asn-319 to Val-482. The segment at Glu-356–Gln-389 is disordered. Positions Gly-359 to Gly-376 are enriched in gly residues. Residues Ile-483 to Gly-501 traverse the membrane as a helical segment. Topologically, residues Leu-502 to Ser-512 are extracellular.

Belongs to the ligand-gated ion channel (TC 1.A.9) family. Acetylcholine receptor (TC 1.A.9.1) subfamily. Alpha-3/CHRNA3 sub-subfamily. Neuronal AChR is composed of two different types of subunits: alpha and beta. CHRNA3/Alpha-3 subunit can be combined to CHRNB2/beta-2 or CHRNB4/beta-4 to give rise to functional receptors. In terms of tissue distribution, expressed in retina and brain.

The protein resides in the synaptic cell membrane. It localises to the cell membrane. It is found in the endoplasmic reticulum. The protein localises to the golgi apparatus. It carries out the reaction K(+)(in) = K(+)(out). The catalysed reaction is Na(+)(in) = Na(+)(out). It catalyses the reaction Ca(2+)(in) = Ca(2+)(out). Its activity is regulated as follows. Activated by a myriad of ligands such as acetylcholine, cytisine, nicotine, choline and epibatidine. The heteropentamer CHRNA3:CHRNB2 activity is blocked by alpha-conotoxins ImI, ImII, PnIA, GID and MII. The heteropentamer CHRNA3:CHRNB4 activity is blocked by the alpha-conotoxin ImI and AuIB. Its function is as follows. Component of neuronal acetylcholine receptors (nAChRs) that function as pentameric, ligand-gated cation channels with high calcium permeability among other activities. nAChRs are excitatory neurotrasnmitter receptors formed by a collection of nAChR subunits known to mediate synaptic transmission in the nervous system and the neuromuscular junction. Each nAchR subunit confers differential attributes to channel properties, including activation, deactivation and desensitization kinetics, pH sensitivity, cation permeability, and binding to allosteric modulators. CHRNA3 forms heteropentameric neuronal acetylcholine receptors with CHRNB2 and CHRNB4. CHRNA3:CHRNB4 being predominant in neurons of the autonomic ganglia, it is known as ganglionic nicotinic receptor. CHRNA3:CHRNB4 also plays an important role in the habenulo-interpeduncular tract, modulating the mesolimbic dopamine system and affecting reward circuits and addiction. Hypothalamic CHRNA3:CHRNB4 nAChR activation by nicotine leads to activation of POMC neurons and a decrease in food intake. Also expressed in the urothelium where it modulates reflex bladder activity by increasing intracellular calcium through extracellular influx and basal ATP release. This chain is Neuronal acetylcholine receptor subunit alpha-3 (chrna3), found in Carassius auratus (Goldfish).